The primary structure comprises 190 residues: CASP-like protein 2U2 (190 aa).

The Cytoplasmic portion of the chain corresponds to 1-10 (MGEKMQGFQG). The chain crosses the membrane as a helical span at residues 11 to 31 (WSIGIRFLTSCVSIASLILLL). The Extracellular segment spans residues 32 to 59 (KSKQTVQVSVGLDYVTQQVKYSDTSAFV). The helical transmembrane segment at 60-80 (YLVFSDILVAVYCIVVLVGLI) threads the bilayer. The Cytoplasmic portion of the chain corresponds to 81-94 (PAALGKSHPGKAGQ). Residues 95–115 (WAIFIFDQVLAYVLLAAASSA) traverse the membrane as a helical segment. Topologically, residues 116 to 144 (TEVAYLADKGMAKTSWEAVCPRFAHFCHT) are extracellular. A helical membrane pass occupies residues 145-165 (VMASISLSFVAVLLLALLAVV). At 166–190 (SASGLFGRFYRRPLFAVKMRHNTLI) the chain is on the cytoplasmic side.

Belongs to the Casparian strip membrane proteins (CASP) family. Homodimer and heterodimers.

The protein resides in the cell membrane. The sequence is that of CASP-like protein 2U2 from Pteridium aquilinum subsp. aquilinum (Bracken fern).